We begin with the raw amino-acid sequence, 83 residues long: Cytochrome c-554(548) (83 aa).

4 residues coordinate heme c: Cys14, Cys17, His18, and Met63.

As to quaternary structure, homodimer. Binds 1 heme c group covalently per subunit.

This is Cytochrome c-554(548) from Halomonas halodenitrificans (strain ATCC 12084 / NCIMB 8669) (Paracoccus halodenitrificans).